We begin with the raw amino-acid sequence, 173 residues long: Translation initiation factor IF-3 (173 aa).

Belongs to the IF-3 family. As to quaternary structure, monomer.

It is found in the cytoplasm. IF-3 binds to the 30S ribosomal subunit and shifts the equilibrium between 70S ribosomes and their 50S and 30S subunits in favor of the free subunits, thus enhancing the availability of 30S subunits on which protein synthesis initiation begins. The sequence is that of Translation initiation factor IF-3 from Methylobacterium radiotolerans (strain ATCC 27329 / DSM 1819 / JCM 2831 / NBRC 15690 / NCIMB 10815 / 0-1).